The sequence spans 149 residues: Heat shock protein beta-3 (149 aa).

In terms of domain architecture, sHSP spans 47-149; sequence KARAAQAPPV…VEVKDSAGTK (103 aa).

This sequence belongs to the small heat shock protein (HSP20) family.

It is found in the cytoplasm. Its subcellular location is the nucleus. Its function is as follows. Inhibitor of actin polymerization. The protein is Heat shock protein beta-3 (HSPB3) of Bos taurus (Bovine).